The following is a 439-amino-acid chain: Paraneoplastic antigen-like protein 8A (439 aa).

Residues 213–439 (ETPNNWNATE…RRATNESRKV (227 aa)) are disordered. Residues 231 to 249 (LVRRAGAKSRSRRKKQKKN) show a composition bias toward basic residues. Polar residues predominate over residues 403–419 (KAPQGQQPAEATASTSR). Residues 423-439 (AKPEGSPRRATNESRKV) are compositionally biased toward basic and acidic residues.

This sequence belongs to the PNMA family.

This Pongo abelii (Sumatran orangutan) protein is Paraneoplastic antigen-like protein 8A (PNMA8A).